We begin with the raw amino-acid sequence, 276 residues long: Pirin-like protein CC_0481 (276 aa).

It belongs to the pirin family.

The protein is Pirin-like protein CC_0481 of Caulobacter vibrioides (strain ATCC 19089 / CIP 103742 / CB 15) (Caulobacter crescentus).